The following is a 202-amino-acid chain: Venom allergen 5.02 (202 aa).

4 cysteine pairs are disulfide-bonded: cysteine 4-cysteine 16, cysteine 8-cysteine 101, cysteine 26-cysteine 94, and cysteine 168-cysteine 185. In terms of domain architecture, SCP spans 46–187; it reads KQHNEFRQKV…WHRHYLVCNY (142 aa).

Belongs to the CRISP family. Venom allergen 5-like subfamily. Expressed by the venom gland.

The protein resides in the secreted. This is Venom allergen 5.02 from Vespa crabro (European hornet).